We begin with the raw amino-acid sequence, 43 residues long: Mu-conotoxin-like Cal 12.2c (43 aa).

R1 is a propeptide. 4 disulfide bridges follow: C4–C16, C11–C24, C18–C29, and C23–C35. W31 is subject to 6'-bromotryptophan. The residue at position 36 (P36) is a 4-hydroxyproline. W40 carries the 6'-bromotryptophan modification.

As to expression, expressed by the venom duct.

Its subcellular location is the secreted. Mu-conotoxins block voltage-gated sodium channels. This toxin reversibly blocks voltage-gated sodium channel in cephalopods, with no alteration in the voltage dependence of sodium conductance or on the kinetics of inactivation. This is Mu-conotoxin-like Cal 12.2c from Californiconus californicus (California cone).